Here is a 118-residue protein sequence, read N- to C-terminus: Ig heavy chain V region AC38 205.12 (118 aa).

The segment at Glu-1–Arg-98 is v segment. Residues Cys-22 and Cys-96 are joined by a disulfide bond. A d segment region spans residues Gly-99–Pro-104. Positions Phe-105 to Ser-118 are j segment.

This chain is Ig heavy chain V region AC38 205.12, found in Mus musculus (Mouse).